A 328-amino-acid polypeptide reads, in one-letter code: Malate dehydrogenase (328 aa).

Position 11–17 (11–17 (GAAGQIG)) interacts with NAD(+). Substrate is bound by residues R94 and R100. NAD(+)-binding positions include N107, Q114, and 131–133 (VGN). N133 and R164 together coordinate substrate. H189 serves as the catalytic Proton acceptor.

The protein belongs to the LDH/MDH superfamily. MDH type 2 family.

It carries out the reaction (S)-malate + NAD(+) = oxaloacetate + NADH + H(+). Its function is as follows. Catalyzes the reversible oxidation of malate to oxaloacetate. This Xanthomonas axonopodis pv. citri (strain 306) protein is Malate dehydrogenase.